The following is a 249-amino-acid chain: Derlin-2 (249 aa).

At 1–21 the chain is on the cytoplasmic side; it reads MAQAVEEWYRQMPIITRSYLT. Residues 22–42 traverse the membrane as a helical segment; sequence AAVVTTVGCTLEIISPYHLYL. Topologically, residues 43–96 are lumenal; that stretch reads NPKLVVQHYEIWRLVTNFLYFRKMDLDFLFHMFFLARYCKLLEENSFRGRTADF. A helical membrane pass occupies residues 97-117; sequence FYMLLFGATVLTGIVLIGGMI. Residues 118 to 122 are Cytoplasmic-facing; that stretch reads PYISE. Residues 123-143 form a helical membrane-spanning segment; sequence TFARILFLSNSLTFMMVYVWS. The Lumenal segment spans residues 144–152; the sequence is KHNPFIHMS. Residues 153–173 traverse the membrane as a helical segment; it reads FLGLFTFTAAYLPWVLLGFSI. Topologically, residues 174–249 are cytoplasmic; sequence LVGSSTWVDL…GAMGADPQAQ (76 aa).

It belongs to the derlin family.

It is found in the endoplasmic reticulum membrane. May be involved in the degradation process of specific misfolded endoplasmic reticulum (ER) luminal proteins. The chain is Derlin-2 (DER2) from Oryza sativa subsp. japonica (Rice).